The sequence spans 104 residues: Nucleoid-associated protein LSL_1227 (104 aa).

Positions 1–19 are enriched in low complexity; it reads MMMRGMNMQSMMKQMQKLQ. A disordered region spans residues 1–24; the sequence is MMMRGMNMQSMMKQMQKLQKNMKK.

Belongs to the YbaB/EbfC family. As to quaternary structure, homodimer.

It localises to the cytoplasm. The protein localises to the nucleoid. Functionally, binds to DNA and alters its conformation. May be involved in regulation of gene expression, nucleoid organization and DNA protection. This Ligilactobacillus salivarius (strain UCC118) (Lactobacillus salivarius) protein is Nucleoid-associated protein LSL_1227.